Here is a 512-residue protein sequence, read N- to C-terminus: Putative ribose/galactose/methyl galactoside import ATP-binding protein 1 (512 aa).

2 consecutive ABC transporter domains span residues 14–251 (IALT…VGRQ) and 262–507 (TSAN…TQRE). An ATP-binding site is contributed by 46 to 53 (GENGAGKS).

Belongs to the ABC transporter superfamily. Carbohydrate importer 2 (CUT2) (TC 3.A.1.2) family.

It localises to the cell inner membrane. The catalysed reaction is D-ribose(out) + ATP + H2O = D-ribose(in) + ADP + phosphate + H(+). It carries out the reaction D-galactose(out) + ATP + H2O = D-galactose(in) + ADP + phosphate + H(+). In terms of biological role, part of an ABC transporter complex involved in carbohydrate import. Could be involved in ribose, galactose and/or methyl galactoside import. Responsible for energy coupling to the transport system. The polypeptide is Putative ribose/galactose/methyl galactoside import ATP-binding protein 1 (Burkholderia lata (strain ATCC 17760 / DSM 23089 / LMG 22485 / NCIMB 9086 / R18194 / 383)).